A 214-amino-acid chain; its full sequence is ATP phosphoribosyltransferase (214 aa).

Belongs to the ATP phosphoribosyltransferase family. Short subfamily. Heteromultimer composed of HisG and HisZ subunits.

The protein localises to the cytoplasm. The catalysed reaction is 1-(5-phospho-beta-D-ribosyl)-ATP + diphosphate = 5-phospho-alpha-D-ribose 1-diphosphate + ATP. It functions in the pathway amino-acid biosynthesis; L-histidine biosynthesis; L-histidine from 5-phospho-alpha-D-ribose 1-diphosphate: step 1/9. In terms of biological role, catalyzes the condensation of ATP and 5-phosphoribose 1-diphosphate to form N'-(5'-phosphoribosyl)-ATP (PR-ATP). Has a crucial role in the pathway because the rate of histidine biosynthesis seems to be controlled primarily by regulation of HisG enzymatic activity. The chain is ATP phosphoribosyltransferase from Ruminiclostridium cellulolyticum (strain ATCC 35319 / DSM 5812 / JCM 6584 / H10) (Clostridium cellulolyticum).